The following is a 734-amino-acid chain: Ribosomal RNA large subunit methyltransferase K/L (734 aa).

The THUMP domain maps to H49–L167.

Belongs to the methyltransferase superfamily. RlmKL family.

The protein localises to the cytoplasm. The enzyme catalyses guanosine(2445) in 23S rRNA + S-adenosyl-L-methionine = N(2)-methylguanosine(2445) in 23S rRNA + S-adenosyl-L-homocysteine + H(+). The catalysed reaction is guanosine(2069) in 23S rRNA + S-adenosyl-L-methionine = N(2)-methylguanosine(2069) in 23S rRNA + S-adenosyl-L-homocysteine + H(+). In terms of biological role, specifically methylates the guanine in position 2445 (m2G2445) and the guanine in position 2069 (m7G2069) of 23S rRNA. The sequence is that of Ribosomal RNA large subunit methyltransferase K/L from Acinetobacter baumannii (strain ACICU).